Here is a 342-residue protein sequence, read N- to C-terminus: Anthranilate phosphoribosyltransferase (342 aa).

5-phospho-alpha-D-ribose 1-diphosphate contacts are provided by residues Gly-74, 77-78 (GD), Thr-82, 84-87 (NVST), 101-109 (KHGNRSVSG), and Ser-113. Residue Gly-74 coordinates anthranilate. A Mg(2+)-binding site is contributed by Ser-86. Asn-104 contacts anthranilate. Arg-159 is a binding site for anthranilate. Positions 218 and 219 each coordinate Mg(2+).

Belongs to the anthranilate phosphoribosyltransferase family. In terms of assembly, homodimer. The cofactor is Mg(2+).

The catalysed reaction is N-(5-phospho-beta-D-ribosyl)anthranilate + diphosphate = 5-phospho-alpha-D-ribose 1-diphosphate + anthranilate. It functions in the pathway amino-acid biosynthesis; L-tryptophan biosynthesis; L-tryptophan from chorismate: step 2/5. In terms of biological role, catalyzes the transfer of the phosphoribosyl group of 5-phosphorylribose-1-pyrophosphate (PRPP) to anthranilate to yield N-(5'-phosphoribosyl)-anthranilate (PRA). The protein is Anthranilate phosphoribosyltransferase of Sulfolobus acidocaldarius (strain ATCC 33909 / DSM 639 / JCM 8929 / NBRC 15157 / NCIMB 11770).